We begin with the raw amino-acid sequence, 52 residues long: MFRWAIIFAVIALIASLLGFGGVAGLSKDFAVILLVIAVILAVIGFISRGRT.

Transmembrane regions (helical) follow at residues 6–26 (IIFAVIALIASLLGFGGVAGL) and 30–50 (FAVILLVIAVILAVIGFISRG).

The protein belongs to the UPF0391 family.

The protein localises to the cell membrane. In Acinetobacter baumannii (strain AYE), this protein is UPF0391 membrane protein ABAYE0050.